A 115-amino-acid chain; its full sequence is U3-lycotoxin-Ls1j (115 aa).

The signal sequence occupies residues M1–A20. A propeptide spanning residues E21–R44 is cleaved from the precursor. Intrachain disulfides connect C48–C63, C55–C72, C62–C87, and C74–C85.

Belongs to the neurotoxin 19 (CSTX) family. 01 subfamily. In terms of tissue distribution, expressed by the venom gland.

It is found in the secreted. The polypeptide is U3-lycotoxin-Ls1j (Lycosa singoriensis (Wolf spider)).